We begin with the raw amino-acid sequence, 445 residues long: Zinc finger protein SHOOT GRAVITROPISM 5 (445 aa).

Residues 22–31 (SSSDPFLSSS) show a composition bias toward low complexity. Residues 22-59 (SSSDPFLSSSENGVTTTNTSTQKRKRRPAGTPDPDAEV) form a disordered region. The segment covering 32-42 (ENGVTTTNTST) has biased composition (polar residues). C2H2-type zinc fingers lie at residues 73–95 (YICEICNQGFQRDQNLQMHRRRH), 115–145 (YVCPEPTCLHHNPCHALGDLVGIKKHFRRKH), and 151–178 (WVCERCSKGYAVQSDYKAHLKTCGTRGH). The Zn(2+) site is built by Cys-153, Cys-156, His-169, Cys-173, Cys-180, Cys-182, His-195, and Cys-199. A CCHC-type 2; atypical zinc finger spans residues 178-201 (HSCDCGRVFSRVESFIEHQDNCSA). The tract at residues 188–200 (RVESFIEHQDNCS) is SHR-binding. Disordered stretches follow at residues 203–253 (RVHR…LEGR) and 281–314 (SSNQNPNQENQQQKVKEPSHHHNHNHDTTNLNLS). The segment covering 214 to 248 (TAVTVPACSSRTASTVSTPSSETNYGGTVAVTTPQ) has biased composition (polar residues). Low complexity predominate over residues 281-293 (SSNQNPNQENQQQ). Positions 340 to 397 (MKIAMKEKAYAEEAKREAKRQREIAENEFANAKKIRQKAQAELERAKFLKEQSMKKIS) form a coiled coil.

In terms of tissue distribution, mainly expressed in the endodermis, the gravity-sensing tissue in inflorescence stems. Mostly present in stems and flowers, and, to a lower extent, in seedlings, hypocotyls, roots and the shoot apical meristem (SAM).

It is found in the nucleus. In terms of biological role, transcription factor involved in inflorescence stems gravitropism, probably by regulating starch accumulation in amyloplasts of graviperceptive cells. Required for stem circumnutation movements. Regulates lateral organ morphogenesis and gravitropic responses. Acts cooperatively with IDD16 to control silique and branche orientation. Involved in the establishment of auxin gradients through the regulation of auxin biosynthesis and transport. In Arabidopsis thaliana (Mouse-ear cress), this protein is Zinc finger protein SHOOT GRAVITROPISM 5.